The primary structure comprises 765 residues: Single-minded homolog 1 (765 aa).

Positions 1 to 53 constitute a bHLH domain; that stretch reads MKEKSKNAARTRREKENSEFYELAKLLPLPSAITSQLDKASIIRLTTSYLKMR. PAS domains are found at residues 77–147 and 218–288; these read GREL…QPYH and PPSA…LVKG. In terms of domain architecture, PAC spans 292-335; it reads TKYYRFLAKQGGWVWVQSYATIVHNSRSSRPHCIVSVNYVLTDT. Residues 336–765 form the Single-minded C-terminal domain; it reads EYKGLQLSLD…GTSVIITNGS (430 aa). 2 stretches are compositionally biased toward low complexity: residues 352 to 365 and 373 to 385; these read PTFS…PTIS and SRLS…SRTS. Disordered regions lie at residues 352–428 and 527–560; these read PTFS…PGSQ and WDED…PHEP. The Nuclear localization signal signature appears at 368–387; that stretch reads RKGAKSRLSSSKSKSRTSPY. Residues 394 to 404 are compositionally biased toward basic and acidic residues; it reads HTERSESDHDS.

As to quaternary structure, efficient DNA binding requires dimerization with another bHLH protein. Heterodimer; forms a heterodimer with ARNT, ARNT2. Detected in lung, skeletal muscle and kidney. During fetal development it is found in the CNS, developing kidney, mesodermal and endodermal tissues, including developing somites, mesonephric duct, and foregut.

It localises to the nucleus. Its function is as follows. Transcriptional factor that may have pleiotropic effects during embryogenesis and in the adult. This Mus musculus (Mouse) protein is Single-minded homolog 1 (Sim1).